The chain runs to 371 residues: Cysteine endopeptidase Rep1 (371 aa).

Positions 1-28 (MGRVISSWRVLAVVAALMAMAAVELCAA) are cleaved as a signal peptide. The propeptide at 29-133 (IPFDERDLES…LPGFMYEGVR (105 aa)) is activation peptide. Disulfide bonds link Cys156-Cys198, Cys190-Cys231, and Cys290-Cys342. Cys159 is a catalytic residue. An N-linked (GlcNAc...) asparagine glycan is attached at Asn228. Residues His296 and Asn317 contribute to the active site.

The protein belongs to the peptidase C1 family. Expressed in germinating seeds.

Its subcellular location is the protein storage vacuole. In terms of biological role, cysteine endopeptidase that digests in vitro both the acidic and basic subunits of glutelin, the major seed storage protein of rice. Acts as a negative regulator of cell death. This is Cysteine endopeptidase Rep1 from Oryza sativa subsp. japonica (Rice).